A 252-amino-acid polypeptide reads, in one-letter code: Major prion protein (252 aa).

The N-terminal stretch at 1–22 (MANLGCWMLVLFVATWSDLGLC) is a signal peptide. Residues 23 to 38 (KKRPKPGGWNTGGSRY) form an interaction with ADGRG6 region. Positions 23–229 (KKRPKPGGWN…ESQAYYQRGS (207 aa)) are interaction with GRB2, ERI3 and SYN1. The segment at 26–106 (PKPGGWNTGG…QWNKPSKPKT (81 aa)) is disordered. 5 repeat units span residues 51–58 (PQGGGWGQ), 59–66 (PHGGGWGQ), 67–74 (PHGGGWGQ), 75–82 (PHGGSWGQ), and 83–90 (PHGGGWGQ). The tract at residues 51 to 90 (PQGGGWGQPHGGGWGQPHGGGWGQPHGGSWGQPHGGGWGQ) is 5 X 8 AA tandem repeats of P-H-G-G-G-W-G-Q. Residues 52 to 94 (QGGGWGQPHGGGWGQPHGGGWGQPHGGSWGQPHGGGWGQGGGT) show a composition bias toward gly residues. The Cu(2+) site is built by His60, Gly61, Gly62, His68, Gly69, Gly70, His76, Gly77, Gly78, His84, Gly85, and Gly86. The cysteines at positions 178 and 213 are disulfide-linked. N-linked (GlcNAc...) asparagine glycosylation is found at Asn180 and Asn196. Ser229 carries GPI-anchor amidated serine lipidation. Positions 230-252 (SMVLFSSPPVILLISFLIFLIVG) are cleaved as a propeptide — removed in mature form.

Belongs to the prion family. In terms of assembly, monomer and homodimer. Has a tendency to aggregate into amyloid fibrils containing a cross-beta spine, formed by a steric zipper of superposed beta-strands. Soluble oligomers may represent an intermediate stage on the path to fibril formation. Copper binding may promote oligomerization. Interacts with GRB2, APP, ERI3/PRNPIP and SYN1. Mislocalized cytosolically exposed PrP interacts with MGRN1; this interaction alters MGRN1 subcellular location and causes lysosomal enlargement. Interacts with APP. Interacts with KIAA1191. Interacts with ADGRG6.

It localises to the cell membrane. The protein resides in the golgi apparatus. Its primary physiological function is unclear. May play a role in neuronal development and synaptic plasticity. May be required for neuronal myelin sheath maintenance. May promote myelin homeostasis through acting as an agonist for ADGRG6 receptor. May play a role in iron uptake and iron homeostasis. Soluble oligomers are toxic to cultured neuroblastoma cells and induce apoptosis (in vitro). Association with GPC1 (via its heparan sulfate chains) targets PRNP to lipid rafts. Also provides Cu(2+) or Zn(2+) for the ascorbate-mediated GPC1 deaminase degradation of its heparan sulfate side chains. The sequence is that of Major prion protein (PRNP) from Sapajus apella (Brown-capped capuchin).